A 310-amino-acid chain; its full sequence is Cell division protein FtsQ (310 aa).

The segment at 1–57 (MSEPENTAEDKDAEAAISADAVESETTADGGENPAEGESAEGPRMRARRERMERREA) is disordered. Over 1–95 (MSEPENTAED…AGRGKVQGLQ (95 aa)) the chain is Cytoplasmic. A helical transmembrane segment spans residues 96 to 116 (TLLLVVLLALIAVGLGSILYF). At 117–310 (TPLMSVRQTV…VSSPDLPTVK (194 aa)) the chain is on the extracellular side. In terms of domain architecture, POTRA spans 120–188 (MSVRQTVVTG…STLRVTIVER (69 aa)).

This sequence belongs to the FtsQ/DivIB family. FtsQ subfamily.

It localises to the cell membrane. In terms of biological role, essential cell division protein. The sequence is that of Cell division protein FtsQ from Mycobacteroides abscessus (strain ATCC 19977 / DSM 44196 / CCUG 20993 / CIP 104536 / JCM 13569 / NCTC 13031 / TMC 1543 / L948) (Mycobacterium abscessus).